The sequence spans 151 residues: tRNA-specific adenosine deaminase (151 aa).

In terms of domain architecture, CMP/dCMP-type deaminase spans 1–111 (MGKEYFLKVA…LDKKHGGVVS (111 aa)). His-52 is a binding site for Zn(2+). Residue Glu-54 is the Proton donor of the active site. 2 residues coordinate Zn(2+): Cys-82 and Cys-85.

The protein belongs to the cytidine and deoxycytidylate deaminase family. In terms of assembly, homodimer. Requires Zn(2+) as cofactor.

The catalysed reaction is adenosine(34) in tRNA + H2O + H(+) = inosine(34) in tRNA + NH4(+). Catalyzes the deamination of adenosine to inosine at the wobble position 34 of tRNA(Arg2). The polypeptide is tRNA-specific adenosine deaminase (Aquifex aeolicus (strain VF5)).